The following is a 296-amino-acid chain: Light-independent protochlorophyllide reductase iron-sulfur ATP-binding protein (296 aa).

ATP-binding positions include 39 to 44 and Lys-68; that span reads GIGKST. Residue Ser-43 participates in Mg(2+) binding. [4Fe-4S] cluster contacts are provided by Cys-124 and Cys-158. 209–210 serves as a coordination point for ATP; it reads NR.

It belongs to the NifH/BchL/ChlL family. Homodimer. Protochlorophyllide reductase is composed of three subunits; ChlL, ChlN and ChlB. The cofactor is [4Fe-4S] cluster.

It carries out the reaction chlorophyllide a + oxidized 2[4Fe-4S]-[ferredoxin] + 2 ADP + 2 phosphate = protochlorophyllide a + reduced 2[4Fe-4S]-[ferredoxin] + 2 ATP + 2 H2O. It functions in the pathway porphyrin-containing compound metabolism; chlorophyll biosynthesis (light-independent). Functionally, component of the dark-operative protochlorophyllide reductase (DPOR) that uses Mg-ATP and reduced ferredoxin to reduce ring D of protochlorophyllide (Pchlide) to form chlorophyllide a (Chlide). This reaction is light-independent. The L component serves as a unique electron donor to the NB-component of the complex, and binds Mg-ATP. The sequence is that of Light-independent protochlorophyllide reductase iron-sulfur ATP-binding protein from Synechococcus sp. (strain CC9605).